The primary structure comprises 259 residues: Global transcriptional regulator CodY (259 aa).

The GAF domain stretch occupies residues methionine 1–leucine 155. The segment at residues alanine 203–arginine 222 is a DNA-binding region (H-T-H motif).

Belongs to the CodY family.

The protein resides in the cytoplasm. Its function is as follows. DNA-binding global transcriptional regulator which is involved in the adaptive response to starvation and acts by directly or indirectly controlling the expression of numerous genes in response to nutrient availability. During rapid exponential growth, CodY is highly active and represses genes whose products allow adaptation to nutrient depletion. The sequence is that of Global transcriptional regulator CodY from Exiguobacterium sp. (strain ATCC BAA-1283 / AT1b).